A 250-amino-acid polypeptide reads, in one-letter code: tRNA (guanine-N(1)-)-methyltransferase (250 aa).

Residues glycine 116 and 136–141 (IGDYVL) each bind S-adenosyl-L-methionine.

This sequence belongs to the RNA methyltransferase TrmD family. Homodimer.

It is found in the cytoplasm. It carries out the reaction guanosine(37) in tRNA + S-adenosyl-L-methionine = N(1)-methylguanosine(37) in tRNA + S-adenosyl-L-homocysteine + H(+). Its function is as follows. Specifically methylates guanosine-37 in various tRNAs. In Pseudomonas entomophila (strain L48), this protein is tRNA (guanine-N(1)-)-methyltransferase.